A 194-amino-acid polypeptide reads, in one-letter code: Extracellular globin-E1 (194 aa).

2 Globin domains span residues 1–45 (DISH…MGLS) and 55–194 (GLSG…LRQA). Histidine 150 contributes to the heme b binding site.

It belongs to the globin family. Artemia hemoglobin is a dimer of two similar sized subunits. Each subunit represents a globin chain which exists in two forms (alpha and beta), thus making possible three different phenotypes (HB1, alpha(2), HB2, alpha/beta, HB3, beta(2)). The globin chain is a polymer of eight heme-binding covalently linked domains.

The polypeptide is Extracellular globin-E1 (Artemia sp. (Brine shrimp)).